Reading from the N-terminus, the 574-residue chain is Serine/threonine-protein kinase fray1 (574 aa).

Basic and acidic residues predominate over residues N24–E41. The disordered stretch occupies residues N24–H64. A Protein kinase domain is found at Y97–F357. ATP contacts are provided by residues I103–V111 and K126. The Proton acceptor role is filled by D221. Phosphothreonine; by autocatalysis is present on T256. Disordered regions lie at residues Y381–M447, L462–E514, and F532–H554. Composition is skewed to low complexity over residues S386–P403, K418–N441, and L462–L475. The segment covering G478–S491 has biased composition (basic residues). Over residues P492–P506 the composition is skewed to low complexity. Basic and acidic residues predominate over residues K536 to H553.

The protein belongs to the protein kinase superfamily. STE Ser/Thr protein kinase family. STE20 subfamily. It depends on Mn(2+) as a cofactor. In terms of processing, undergoes autophosphorylation in the catalytic domain.

The catalysed reaction is L-seryl-[protein] + ATP = O-phospho-L-seryl-[protein] + ADP + H(+). It catalyses the reaction L-threonyl-[protein] + ATP = O-phospho-L-threonyl-[protein] + ADP + H(+). The polypeptide is Serine/threonine-protein kinase fray1 (Dictyostelium discoideum (Social amoeba)).